The chain runs to 568 residues: MPYRMSRQAYAETYGPTVGDRIRLADTELFIQVEQDFTTYGDEVKFGGGKVIRDGMGQSPIANADGAVDLVITNALILDWWGIVKADIGIKDGKIFKIGKAGNPYIQDHVDIIIGPGTEALAGEGMILTAGGIDTHIHFICPQQIEVAIASGITTMIGGGTGPATGTNATTCTPGPWNMYRMLQAADAFPMNLGFLGKGNASQPQGLTEQIFAGAIGLKLHEDWGTTPATIDTCLSVADEYDVQVAIHTDTLNEAGFVEDTIAAFKNRAIHTYHTEGAGGGHAPDIIKVCGQANVLPSSTNPTRPYTVNTLDEHLDMLMVCHHLDPAIAEDVAFAESRIRRETIAAEDILHDLGAFSMIASDSQAMGRVGEVIIRTWQTSHKMKVQRGSLAGDGKADNLRAKRYVAKYTINPAITHGISQYVGSVEAGKLADLCLWRPGFFGVKPEIVIKGGMIAWSQMGDANASIPTPQPVHMRPMFGSFAGARNATSLTFVSQAALERDIPQQLGLRKSAVAVSGTRQLTKQEMKLNDALPHIEVDPETYEVRADGELLTCEPATVLPMAQRYFLF.

A Urease domain is found at 131–568; it reads GGIDTHIHFI…LPMAQRYFLF (438 aa). His136, His138, and Lys219 together coordinate Ni(2+). Lys219 bears the N6-carboxylysine mark. His221 is a substrate binding site. Ni(2+) contacts are provided by His248 and His274. Residue His322 is the Proton donor of the active site. Residue Asp362 participates in Ni(2+) binding.

This sequence belongs to the metallo-dependent hydrolases superfamily. Urease alpha subunit family. In terms of assembly, heterotrimer of UreA (gamma), UreB (beta) and UreC (alpha) subunits. Three heterotrimers associate to form the active enzyme. The cofactor is Ni cation. In terms of processing, carboxylation allows a single lysine to coordinate two nickel ions.

The protein localises to the cytoplasm. It catalyses the reaction urea + 2 H2O + H(+) = hydrogencarbonate + 2 NH4(+). It functions in the pathway nitrogen metabolism; urea degradation; CO(2) and NH(3) from urea (urease route): step 1/1. The polypeptide is Urease subunit alpha (Trichormus variabilis (strain ATCC 29413 / PCC 7937) (Anabaena variabilis)).